The chain runs to 298 residues: ATP phosphoribosyltransferase (298 aa).

The protein belongs to the ATP phosphoribosyltransferase family. Long subfamily. Mg(2+) serves as cofactor.

It localises to the cytoplasm. It carries out the reaction 1-(5-phospho-beta-D-ribosyl)-ATP + diphosphate = 5-phospho-alpha-D-ribose 1-diphosphate + ATP. It functions in the pathway amino-acid biosynthesis; L-histidine biosynthesis; L-histidine from 5-phospho-alpha-D-ribose 1-diphosphate: step 1/9. With respect to regulation, feedback inhibited by histidine. Catalyzes the condensation of ATP and 5-phosphoribose 1-diphosphate to form N'-(5'-phosphoribosyl)-ATP (PR-ATP). Has a crucial role in the pathway because the rate of histidine biosynthesis seems to be controlled primarily by regulation of HisG enzymatic activity. This is ATP phosphoribosyltransferase from Aeromonas hydrophila subsp. hydrophila (strain ATCC 7966 / DSM 30187 / BCRC 13018 / CCUG 14551 / JCM 1027 / KCTC 2358 / NCIMB 9240 / NCTC 8049).